A 266-amino-acid chain; its full sequence is UPF0354 protein lin1649 (266 aa).

It belongs to the UPF0354 family.

This chain is UPF0354 protein lin1649, found in Listeria innocua serovar 6a (strain ATCC BAA-680 / CLIP 11262).